We begin with the raw amino-acid sequence, 408 residues long: MKILTLNTGSSSLKFTLYQHKNTQILASGTIEKIKTKKSIIRIKTQNDLLEKIDKHIKSHKEALKQLIKILTNKKLNIINNLNEIQGIGHRIVHGGPNFKNSVILNENILSELEKISALAPLHNPTAIKVIEITLKIFPNAKQVLCFDTSWHQTMNENAFLYATPYSWYKDYNIRKYGFHGLSYAYITKRVATILNKHKKDLNLIILHLGNGSSINAVKKGISYDTSMGLTPLEGLAMGTRSGDIDPAIIPLMSKVLNKTPRKIEEILNKESGMLGISLKSNDLRDIWEGVENNEYNSKLAVEIMAYRIKKYIGSYLAILEFNIDAIVFTAGIGVTDYGIRELSLKGFEKIGIEIDLQKNNLAREKNIESDISSEKSKTKILVIPTNEELTILEDTYNLITEHSRDLK.

Asn7 contributes to the Mg(2+) binding site. Position 14 (Lys14) interacts with ATP. Arg91 is a binding site for substrate. The active-site Proton donor/acceptor is the Asp148. Residues 208-212 (HLGNG) and 283-285 (DLR) contribute to the ATP site. Residue Glu388 participates in Mg(2+) binding.

This sequence belongs to the acetokinase family. In terms of assembly, homodimer. It depends on Mg(2+) as a cofactor. The cofactor is Mn(2+).

It is found in the cytoplasm. The catalysed reaction is acetate + ATP = acetyl phosphate + ADP. It participates in metabolic intermediate biosynthesis; acetyl-CoA biosynthesis; acetyl-CoA from acetate: step 1/2. Functionally, catalyzes the formation of acetyl phosphate from acetate and ATP. Can also catalyze the reverse reaction. This Borrelia hermsii (strain HS1 / DAH) protein is Acetate kinase.